Here is a 565-residue protein sequence, read N- to C-terminus: Formate--tetrahydrofolate ligase (565 aa).

73–80 (TPAGEGKS) is a binding site for ATP.

This sequence belongs to the formate--tetrahydrofolate ligase family.

It catalyses the reaction (6S)-5,6,7,8-tetrahydrofolate + formate + ATP = (6R)-10-formyltetrahydrofolate + ADP + phosphate. The protein operates within one-carbon metabolism; tetrahydrofolate interconversion. The protein is Formate--tetrahydrofolate ligase of Arthrobacter sp. (strain FB24).